We begin with the raw amino-acid sequence, 541 residues long: Protein wntless homolog (541 aa).

The Cytoplasmic segment spans residues 1–15 (MAGAIIENMSTKKLC). A helical membrane pass occupies residues 16–36 (IVGGILLVFQIIAFLVGGLIA). Over 37-232 (PGPTTAVSYM…GIHQNGGFTK (196 aa)) the chain is Lumenal. Positions 101–232 (MEMSPWFQFM…GIHQNGGFTK (132 aa)) are interaction with Wnt proteins. The chain crosses the membrane as a helical span at residues 233 to 253 (VWFAMKTFLTPSIFIIMVWYW). Residues 254–268 (RRITMMSRPPVLLEK) are Cytoplasmic-facing. The helical transmembrane segment at 269-289 (VIFALGISMTFINIPVEWFSI) threads the bilayer. Residues 290-303 (GFDWTWMLLFGDIR) are Lumenal-facing. A helical membrane pass occupies residues 304-324 (QGIFYAMLLSFWIIFCGEHMM). At 325–331 (DQHERNH) the chain is on the cytoplasmic side. A helical membrane pass occupies residues 332–352 (IAGYWKQVGPIAVGSFCLFIF). At 353 to 380 (DMCERGVQLTNPFYSIWTTDIGTELAMA) the chain is on the lumenal side. A helical transmembrane segment spans residues 381–401 (FIIVAGICLCLYFLFLCFMVF). Topologically, residues 402-431 (QVFRNISGKQSSLPAMSKVRRLHYEGLIFR) are cytoplasmic. A helical transmembrane segment spans residues 432–452 (FKFLMLITLACAAMTVIFFIV). Topologically, residues 453 to 471 (SQVTEGHWKWGGVTVQVNS) are lumenal. The chain crosses the membrane as a helical span at residues 472–492 (AFFTGIYGMWNLYVFALMFLY). Residues 493–541 (APSHKNYGEDQSNGDLGVHSGEELQLTTTITHVDGPTEIYKLTRKEAQE) lie on the Cytoplasmic side of the membrane.

It belongs to the wntless family. In terms of assembly, interacts with WNT3A. Interacts with WNT1, WNT3 and WNT5A. N-glycosylated.

Its subcellular location is the golgi apparatus membrane. It localises to the cytoplasmic vesicle membrane. It is found in the cell membrane. The protein localises to the endoplasmic reticulum membrane. The protein resides in the early endosome membrane. Its function is as follows. Regulates Wnt proteins sorting and secretion in a feedback regulatory mechanism. This reciprocal interaction plays a key role in the regulation of expression, subcellular location, binding and organelle-specific association of Wnt proteins. Plays also an important role in establishment of the anterior-posterior body axis formation during development. The protein is Protein wntless homolog (WLS) of Homo sapiens (Human).